The following is a 32-amino-acid chain: Photosystem II reaction center protein Z (32 aa).

A helical membrane pass occupies residues 9 to 31 (FILLGAVTWAILVFIVGSLNSYV).

The protein belongs to the PsbZ family. As to quaternary structure, PSII is composed of 1 copy each of membrane proteins PsbA, PsbB, PsbC, PsbD, PsbE, PsbF, PsbH, PsbI, PsbJ, PsbK, PsbL, PsbM, PsbT, PsbY, PsbZ, Psb30/Ycf12, at least 3 peripheral proteins of the oxygen-evolving complex and a large number of cofactors. It forms dimeric complexes.

The protein localises to the plastid. It is found in the chloroplast thylakoid membrane. In terms of biological role, may control the interaction of photosystem II (PSII) cores with the light-harvesting antenna, regulates electron flow through the 2 photosystem reaction centers. PSII is a light-driven water plastoquinone oxidoreductase, using light energy to abstract electrons from H(2)O, generating a proton gradient subsequently used for ATP formation. The chain is Photosystem II reaction center protein Z from Euglena stellata.